A 434-amino-acid chain; its full sequence is ATP-dependent protease ATPase subunit HslU (434 aa).

ATP contacts are provided by residues V18, 60–65 (GVGKTE), D247, E312, and R384.

It belongs to the ClpX chaperone family. HslU subfamily. As to quaternary structure, a double ring-shaped homohexamer of HslV is capped on each side by a ring-shaped HslU homohexamer. The assembly of the HslU/HslV complex is dependent on binding of ATP.

Its subcellular location is the cytoplasm. In terms of biological role, ATPase subunit of a proteasome-like degradation complex; this subunit has chaperone activity. The binding of ATP and its subsequent hydrolysis by HslU are essential for unfolding of protein substrates subsequently hydrolyzed by HslV. HslU recognizes the N-terminal part of its protein substrates and unfolds these before they are guided to HslV for hydrolysis. This is ATP-dependent protease ATPase subunit HslU from Bradyrhizobium sp. (strain ORS 278).